Consider the following 427-residue polypeptide: Trigger factor (427 aa).

The 86-residue stretch at 163–248 (GDTVVIDFVG…VHEVKAKEVP (86 aa)) folds into the PPIase FKBP-type domain.

The protein belongs to the FKBP-type PPIase family. Tig subfamily.

It is found in the cytoplasm. It catalyses the reaction [protein]-peptidylproline (omega=180) = [protein]-peptidylproline (omega=0). Its function is as follows. Involved in protein export. Acts as a chaperone by maintaining the newly synthesized protein in an open conformation. Functions as a peptidyl-prolyl cis-trans isomerase. The protein is Trigger factor of Streptococcus equi subsp. zooepidemicus (strain MGCS10565).